A 263-amino-acid polypeptide reads, in one-letter code: MATAVAEELLLAEERMLAALAYLQCAVGCAVLARNRETNLAYGRHASPSFRVRVPARAAWVVQELPSLALPLYQYASESAPRLRSAPNCILLAMFLVHYGHRCLIYPFLMRGGKPMPLLACTMAIMFCTFNGYLQSRYLSHWAVYADDWVTDPRFLIGFGLWLAGMLINIHSDHILRNLRKPGDTGYKIPRGGLFEYVTAANYFGEIMEWCGYALASWSVQGAAFAFFTFCFLSGRAKEHHRWYLQKFEEYPKFRKILIPFLF.

Helical transmembrane passes span 16 to 33 (MLAA…AVLA), 90 to 110 (ILLA…PFLM), 115 to 135 (PMPL…GYLQ), 155 to 175 (FLIG…SDHI), and 213 to 233 (YALA…FCFL).

The protein belongs to the steroid 5-alpha reductase family.

It is found in the microsome membrane. It localises to the endoplasmic reticulum membrane. It carries out the reaction a 3-oxo-5alpha-steroid + NADP(+) = a 3-oxo-Delta(4)-steroid + NADPH + H(+). The catalysed reaction is 5alpha-pregnane-3,20-dione + NADP(+) = progesterone + NADPH + H(+). The enzyme catalyses 17beta-hydroxy-5alpha-androstan-3-one + NADP(+) = testosterone + NADPH + H(+). It catalyses the reaction androst-4-ene-3,17-dione + NADPH + H(+) = 5alpha-androstan-3,17-dione + NADP(+). Its function is as follows. Converts testosterone into 5-alpha-dihydrotestosterone and progesterone or corticosterone into their corresponding 5-alpha-3-oxosteroids. It plays a central role in sexual differentiation and androgen physiology. This is 3-oxo-5-alpha-steroid 4-dehydrogenase 1 (SRD5A1) from Macaca fascicularis (Crab-eating macaque).